Reading from the N-terminus, the 443-residue chain is MDLGTTKYIIYTELIADGYVEKHDVIGAIFGQTEGLLSTELDLRDLQKSGRIGRIDVELENVNGKSFAKITLPSSLDKVETSILAATLETIDRVGPCFATVKIANVEDIRVSKRQYITNRARHILRQLMDEMVDTYEITEEIKESLRTEEIMEYGPENLPCGPNILHSDSIIIVEGRADVLTLLRCGIKNAIAVEGTSVPKTIMEISKKKTTTAFTDGDRGGELILKELLQTCDIDYVSRAPYGKEVEGTSKKEIMKCLRAKVPVEQIIGEKYKNIVESNPVLNEELVEKITPKYIEEVTHSSKEKNELEKTFKPEIEKETVVIEKIKSFEKKTIDADEKTILQENSNLEKKYNGVKEILEGIKNTGLVKFVVDGKEKTNSFKEFLTNIQEIKNMDFFAADMPITQKIVDLLHDKTPIIVGTEIKVTKKPVNLRLFSFDEIME.

Residues 169–243 (DSIIIVEGRA…DIDYVSRAPY (75 aa)) enclose the Toprim domain. Positions 175, 217, and 219 each coordinate Mg(2+).

The protein belongs to the archaeal DnaG primase family. As to quaternary structure, forms a ternary complex with MCM helicase and DNA. It depends on Mg(2+) as a cofactor.

It carries out the reaction ssDNA + n NTP = ssDNA/pppN(pN)n-1 hybrid + (n-1) diphosphate.. Its function is as follows. RNA polymerase that catalyzes the synthesis of short RNA molecules used as primers for DNA polymerase during DNA replication. In Methanococcus vannielii (strain ATCC 35089 / DSM 1224 / JCM 13029 / OCM 148 / SB), this protein is DNA primase DnaG.